The chain runs to 262 residues: Small ribosomal subunit protein mS23 (262 aa).

A disordered region spans residues 211 to 262; the sequence is SGQSDEAPEGEGSDMSAGEYDMAVEELAGQGSIPNTPQSTVVPEGTSAPAHA. Over residues 242–251 the composition is skewed to polar residues; the sequence is SIPNTPQSTV.

Belongs to the mitochondrion-specific ribosomal protein mS23 family. Component of the mitochondrial small ribosomal subunit.

It localises to the mitochondrion. The polypeptide is Small ribosomal subunit protein mS23 (RSM25) (Phaeosphaeria nodorum (strain SN15 / ATCC MYA-4574 / FGSC 10173) (Glume blotch fungus)).